A 136-amino-acid polypeptide reads, in one-letter code: Snaclec rhodocytin subunit alpha (136 aa).

3 cysteine pairs are disulfide-bonded: Cys5/Cys16, Cys33/Cys131, and Cys106/Cys123. The C-type lectin domain maps to 12 to 132 (YDQHCYQAFN…CEQMHAFVCK (121 aa)).

Belongs to the snaclec family. In terms of assembly, dimer (non-covalently linked) of heterodimers of subunits alpha and beta (disulfide-linked). In terms of tissue distribution, expressed by the venom gland.

It is found in the secreted. Its function is as follows. Elicits platelet aggregation by the binding to the C-type lectin domain family 1 member B (CLEC1B/CLEC2). Binding leads to tyrosine phosphorylation in the cytoplasmic tail of CLEC1B, which promotes the binding of spleen tyrosine kinase (Syk), subsequent activation of PLC-gamma-2, and platelet activation and aggregation. Binding to GPIbalpha (GP1BA) and alpha-2/beta-1 (ITGA2/ITGB1) may also induce aggregation, but this is controversial. This is Snaclec rhodocytin subunit alpha from Calloselasma rhodostoma (Malayan pit viper).